A 251-amino-acid polypeptide reads, in one-letter code: tRNA (guanine-N(1)-)-methyltransferase (251 aa).

Residues Gly114 and 134-139 (IGDYVL) contribute to the S-adenosyl-L-methionine site.

It belongs to the RNA methyltransferase TrmD family. Homodimer.

It is found in the cytoplasm. The catalysed reaction is guanosine(37) in tRNA + S-adenosyl-L-methionine = N(1)-methylguanosine(37) in tRNA + S-adenosyl-L-homocysteine + H(+). In terms of biological role, specifically methylates guanosine-37 in various tRNAs. The polypeptide is tRNA (guanine-N(1)-)-methyltransferase (Pelotomaculum thermopropionicum (strain DSM 13744 / JCM 10971 / SI)).